Here is a 715-residue protein sequence, read N- to C-terminus: Interferon-induced GTP-binding protein Mx2 (715 aa).

The segment covering 1–14 (MSKAHKSWPHRRRN) has biased composition (basic residues). Disordered stretches follow at residues 1–24 (MSKA…SLKK) and 69–88 (NNQP…PENN). The span at 69 to 80 (NNQPLPGNTSQP) shows a compositional bias: polar residues. The Dynamin-type G domain maps to 115 to 387 (DLALPAIAVI…LITHIQKSLP (273 aa)). The interval 125-132 (GDQSSGKS) is G1 motif. Residue 125-132 (GDQSSGKS) participates in GTP binding. The tract at residues 150–152 (VTR) is G2 motif. The tract at residues 225–228 (DLPG) is G3 motif. Residues 225 to 229 (DLPGI) and 294 to 297 (TKPD) each bind GTP. Positions 294–297 (TKPD) are G4 motif. Residues 326–329 (KCRG) form a G5 motif region. The GED domain occupies 623-714 (FNEIGVHLNA…ALCQFSSKEI (92 aa)).

Belongs to the TRAFAC class dynamin-like GTPase superfamily. Dynamin/Fzo/YdjA family.

It localises to the cytoplasm. The protein localises to the nucleus. Interferon-induced dynamin-like GTPase with antiviral activity. This Macaca mulatta (Rhesus macaque) protein is Interferon-induced GTP-binding protein Mx2 (MX2).